Reading from the N-terminus, the 346-residue chain is NADH-ubiquinone oxidoreductase chain 2 (346 aa).

11 helical membrane passes run Met1–Ile21, His25–Ser45, Phe60–Ala80, Cys95–Phe115, Leu124–Met144, Leu149–Gly169, Ile178–Val195, Leu200–Leu219, Ala242–Pro262, Glu274–Leu294, and Ala326–Val346.

This sequence belongs to the complex I subunit 2 family.

Its subcellular location is the mitochondrion inner membrane. The catalysed reaction is a ubiquinone + NADH + 5 H(+)(in) = a ubiquinol + NAD(+) + 4 H(+)(out). Core subunit of the mitochondrial membrane respiratory chain NADH dehydrogenase (Complex I) that is believed to belong to the minimal assembly required for catalysis. Complex I functions in the transfer of electrons from NADH to the respiratory chain. The immediate electron acceptor for the enzyme is believed to be ubiquinone. The protein is NADH-ubiquinone oxidoreductase chain 2 (MT-ND2) of Anas acuta (Northern pintail).